A 50-amino-acid polypeptide reads, in one-letter code: Large ribosomal subunit protein eL39 (50 aa).

Residues 1–12 (MGKKSKASKKRL) are compositionally biased toward basic residues. 2 disordered regions span residues 1-20 (MGKK…RQNS) and 30-50 (TNRD…DTDE).

Belongs to the eukaryotic ribosomal protein eL39 family.

In Halobacterium salinarum (strain ATCC 700922 / JCM 11081 / NRC-1) (Halobacterium halobium), this protein is Large ribosomal subunit protein eL39 (rpl39e).